Consider the following 345-residue polypeptide: D-erythrose-4-phosphate dehydrogenase (345 aa).

11–12 (RI) serves as a coordination point for NAD(+). Substrate is bound by residues 158 to 160 (SCT), R204, 217 to 218 (TK), and R240. Residue C159 is the Nucleophile of the active site. Residue N322 coordinates NAD(+).

It belongs to the glyceraldehyde-3-phosphate dehydrogenase family. Epd subfamily. As to quaternary structure, homotetramer.

It localises to the cytoplasm. The enzyme catalyses D-erythrose 4-phosphate + NAD(+) + H2O = 4-phospho-D-erythronate + NADH + 2 H(+). Its pathway is cofactor biosynthesis; pyridoxine 5'-phosphate biosynthesis; pyridoxine 5'-phosphate from D-erythrose 4-phosphate: step 1/5. In terms of biological role, catalyzes the NAD-dependent conversion of D-erythrose 4-phosphate to 4-phosphoerythronate. This is D-erythrose-4-phosphate dehydrogenase from Vibrio parahaemolyticus serotype O3:K6 (strain RIMD 2210633).